The following is a 318-amino-acid chain: Pantothenate kinase (318 aa).

Residue 96–103 coordinates ATP; sequence GSVAVGKS.

Belongs to the prokaryotic pantothenate kinase family.

It localises to the cytoplasm. The catalysed reaction is (R)-pantothenate + ATP = (R)-4'-phosphopantothenate + ADP + H(+). It functions in the pathway cofactor biosynthesis; coenzyme A biosynthesis; CoA from (R)-pantothenate: step 1/5. The sequence is that of Pantothenate kinase from Bradyrhizobium diazoefficiens (strain JCM 10833 / BCRC 13528 / IAM 13628 / NBRC 14792 / USDA 110).